We begin with the raw amino-acid sequence, 376 residues long: PCM7-4 (376 aa).

Its function is as follows. Has antibacterial activity against Listeria monocytogenes. The sequence is that of PCM7-4 from Bacillus velezensis.